The chain runs to 190 residues: dCTP deaminase, dUMP-forming (190 aa).

Residues 101 to 106 (KSSLGR), Asp119, 127 to 129 (TLE), Gln148, Tyr162, and Gln174 each bind dCTP. Glu129 (proton donor/acceptor) is an active-site residue. The interval 163–190 (GSTRVGSKYQGQRGPTPSRSYQNFITST) is disordered. Positions 171 to 190 (YQGQRGPTPSRSYQNFITST) are enriched in polar residues.

This sequence belongs to the dCTP deaminase family. Homotrimer.

The catalysed reaction is dCTP + 2 H2O = dUMP + NH4(+) + diphosphate. It participates in pyrimidine metabolism; dUMP biosynthesis; dUMP from dCTP: step 1/1. In terms of biological role, bifunctional enzyme that catalyzes both the deamination of dCTP to dUTP and the hydrolysis of dUTP to dUMP without releasing the toxic dUTP intermediate. The sequence is that of dCTP deaminase, dUMP-forming from Mycolicibacterium paratuberculosis (strain ATCC BAA-968 / K-10) (Mycobacterium paratuberculosis).